Consider the following 205-residue polypeptide: Large ribosomal subunit protein uL3 (205 aa).

This sequence belongs to the universal ribosomal protein uL3 family. As to quaternary structure, part of the 50S ribosomal subunit. Forms a cluster with proteins L14 and L19.

In terms of biological role, one of the primary rRNA binding proteins, it binds directly near the 3'-end of the 23S rRNA, where it nucleates assembly of the 50S subunit. This chain is Large ribosomal subunit protein uL3, found in Flavobacterium johnsoniae (strain ATCC 17061 / DSM 2064 / JCM 8514 / BCRC 14874 / CCUG 350202 / NBRC 14942 / NCIMB 11054 / UW101) (Cytophaga johnsonae).